The sequence spans 121 residues: Small ribosomal subunit protein uS13 (121 aa).

Positions 95–121 (LPVRGQNTKNNARTRKGKAVAIAGKKK) are disordered. Positions 106-121 (ARTRKGKAVAIAGKKK) are enriched in basic residues.

This sequence belongs to the universal ribosomal protein uS13 family. In terms of assembly, part of the 30S ribosomal subunit. Forms a loose heterodimer with protein S19. Forms two bridges to the 50S subunit in the 70S ribosome.

Located at the top of the head of the 30S subunit, it contacts several helices of the 16S rRNA. In the 70S ribosome it contacts the 23S rRNA (bridge B1a) and protein L5 of the 50S subunit (bridge B1b), connecting the 2 subunits; these bridges are implicated in subunit movement. Contacts the tRNAs in the A and P-sites. The sequence is that of Small ribosomal subunit protein uS13 from Streptococcus equi subsp. zooepidemicus (strain H70).